A 240-amino-acid chain; its full sequence is Ubiquinone biosynthesis O-methyltransferase (240 aa).

4 residues coordinate S-adenosyl-L-methionine: arginine 36, glycine 66, aspartate 87, and methionine 129.

Belongs to the methyltransferase superfamily. UbiG/COQ3 family.

The enzyme catalyses a 3-demethylubiquinol + S-adenosyl-L-methionine = a ubiquinol + S-adenosyl-L-homocysteine + H(+). The catalysed reaction is a 3-(all-trans-polyprenyl)benzene-1,2-diol + S-adenosyl-L-methionine = a 2-methoxy-6-(all-trans-polyprenyl)phenol + S-adenosyl-L-homocysteine + H(+). It participates in cofactor biosynthesis; ubiquinone biosynthesis. Functionally, O-methyltransferase that catalyzes the 2 O-methylation steps in the ubiquinone biosynthetic pathway. In Pelagibacter ubique (strain HTCC1062), this protein is Ubiquinone biosynthesis O-methyltransferase.